The primary structure comprises 476 residues: Glycogen synthase (476 aa).

Residue K15 coordinates ADP-alpha-D-glucose.

This sequence belongs to the glycosyltransferase 1 family. Bacterial/plant glycogen synthase subfamily.

The catalysed reaction is [(1-&gt;4)-alpha-D-glucosyl](n) + ADP-alpha-D-glucose = [(1-&gt;4)-alpha-D-glucosyl](n+1) + ADP + H(+). Its pathway is glycan biosynthesis; glycogen biosynthesis. Functionally, synthesizes alpha-1,4-glucan chains using ADP-glucose. This chain is Glycogen synthase, found in Yersinia pseudotuberculosis serotype O:1b (strain IP 31758).